The following is a 132-amino-acid chain: Phosphoribosyl-AMP cyclohydrolase (132 aa).

Aspartate 85 contributes to the Mg(2+) binding site. Zn(2+) is bound at residue cysteine 86. Mg(2+) is bound by residues aspartate 87 and aspartate 89. Cysteine 102 and cysteine 109 together coordinate Zn(2+).

This sequence belongs to the PRA-CH family. As to quaternary structure, homodimer. Mg(2+) is required as a cofactor. Requires Zn(2+) as cofactor.

The protein localises to the cytoplasm. The enzyme catalyses 1-(5-phospho-beta-D-ribosyl)-5'-AMP + H2O = 1-(5-phospho-beta-D-ribosyl)-5-[(5-phospho-beta-D-ribosylamino)methylideneamino]imidazole-4-carboxamide. It functions in the pathway amino-acid biosynthesis; L-histidine biosynthesis; L-histidine from 5-phospho-alpha-D-ribose 1-diphosphate: step 3/9. Catalyzes the hydrolysis of the adenine ring of phosphoribosyl-AMP. This Frankia alni (strain DSM 45986 / CECT 9034 / ACN14a) protein is Phosphoribosyl-AMP cyclohydrolase.